A 199-amino-acid chain; its full sequence is Probable GTP-binding protein EngB (199 aa).

In terms of domain architecture, EngB-type G spans 28 to 199 (DLPEIALAGR…DSWDAILEQV (172 aa)). GTP is bound by residues 36-43 (GRSNVGKS), 63-67 (GKTQL), 81-84 (DVPG), 148-151 (TKAD), and 180-182 (FSS). Mg(2+) contacts are provided by serine 43 and threonine 65.

The protein belongs to the TRAFAC class TrmE-Era-EngA-EngB-Septin-like GTPase superfamily. EngB GTPase family. Requires Mg(2+) as cofactor.

In terms of biological role, necessary for normal cell division and for the maintenance of normal septation. The polypeptide is Probable GTP-binding protein EngB (Streptococcus pyogenes serotype M6 (strain ATCC BAA-946 / MGAS10394)).